Consider the following 282-residue polypeptide: Cytochrome c1 (282 aa).

The signal sequence occupies residues 1-24 (MTIKLRFVASLALVFGLAAASVPA). 4 residues coordinate heme c: cysteine 62, cysteine 65, histidine 66, and methionine 207. A helical membrane pass occupies residues 253-273 (WWVLGFLVIFTGLLVATKIVV).

As to quaternary structure, the main subunits of complex b-c1 are: cytochrome b, cytochrome c1 and the Rieske protein. In terms of processing, binds 1 heme c group covalently per subunit.

Its subcellular location is the cell membrane. Its function is as follows. Component of the ubiquinol-cytochrome c reductase complex (complex III or cytochrome b-c1 complex), which is a respiratory chain that generates an electrochemical potential coupled to ATP synthesis. c1 functions as an electron donor to cytochrome c. The sequence is that of Cytochrome c1 (petC) from Blastochloris viridis (Rhodopseudomonas viridis).